Consider the following 191-residue polypeptide: Xanthine phosphoribosyltransferase (191 aa).

2 residues coordinate xanthine: Leu20 and Asn27. Residue 128-132 (ANGQA) coordinates 5-phospho-alpha-D-ribose 1-diphosphate. Lys156 provides a ligand contact to xanthine.

It belongs to the purine/pyrimidine phosphoribosyltransferase family. Xpt subfamily. In terms of assembly, homodimer.

The protein localises to the cytoplasm. The enzyme catalyses XMP + diphosphate = xanthine + 5-phospho-alpha-D-ribose 1-diphosphate. The protein operates within purine metabolism; XMP biosynthesis via salvage pathway; XMP from xanthine: step 1/1. In terms of biological role, converts the preformed base xanthine, a product of nucleic acid breakdown, to xanthosine 5'-monophosphate (XMP), so it can be reused for RNA or DNA synthesis. This is Xanthine phosphoribosyltransferase from Levilactobacillus brevis (strain ATCC 367 / BCRC 12310 / CIP 105137 / JCM 1170 / LMG 11437 / NCIMB 947 / NCTC 947) (Lactobacillus brevis).